The following is a 519-amino-acid chain: NADH-quinone oxidoreductase subunit N (519 aa).

The next 14 helical transmembrane spans lie at 22–42 (LLPMLIVFGVACAGVLVEAFV), 53–73 (VLALGGLVAALIAVVSNTGLP), 87–107 (PTLFIQGTILALSIGALLLIA), 141–161 (TEVFPLAMFAVGGMMLFPAAN), 163–183 (LITAFVALEVLSLPLYLLAGM), 198–218 (YFLLGAFSSAFFVYGLALVYG), 242–262 (IIVGLALIGISLLFKLSGVPF), 287–307 (VAAFGALLRVFFVAFGGLAWD), 310–330 (PVIWGVAIATMVVGAILGITQ), 336–356 (LLAYSSIAHAGFVLTAFAATT), 363–383 (VLFYLVAYGFMTIGAFAIVIL), 406–426 (LVAGIFALFLLAMAGLPPTSG), 442–461 (AGPLVIVGVLASAVTAYYYL), and 483–503 (GALASAAIALGVIVTVVLGIV).

The protein belongs to the complex I subunit 2 family. NDH-1 is composed of 14 different subunits. Subunits NuoA, H, J, K, L, M, N constitute the membrane sector of the complex.

Its subcellular location is the cell membrane. It carries out the reaction a quinone + NADH + 5 H(+)(in) = a quinol + NAD(+) + 4 H(+)(out). Functionally, NDH-1 shuttles electrons from NADH, via FMN and iron-sulfur (Fe-S) centers, to quinones in the respiratory chain. The immediate electron acceptor for the enzyme in this species is believed to be a menaquinone. Couples the redox reaction to proton translocation (for every two electrons transferred, four hydrogen ions are translocated across the cytoplasmic membrane), and thus conserves the redox energy in a proton gradient. This is NADH-quinone oxidoreductase subunit N from Acidothermus cellulolyticus (strain ATCC 43068 / DSM 8971 / 11B).